The following is a 43-amino-acid chain: Protein PsbN (43 aa).

A helical transmembrane segment spans residues 5–27 (TLIAISISGLLVSFTGYALYTAF).

It belongs to the PsbN family.

Its subcellular location is the plastid. It localises to the chloroplast thylakoid membrane. Its function is as follows. May play a role in photosystem I and II biogenesis. The chain is Protein PsbN from Phaseolus vulgaris (Kidney bean).